Consider the following 96-residue polypeptide: Large ribosomal subunit protein uL23 (96 aa).

This sequence belongs to the universal ribosomal protein uL23 family. As to quaternary structure, part of the 50S ribosomal subunit. Contacts protein L29, and trigger factor when it is bound to the ribosome.

In terms of biological role, one of the early assembly proteins it binds 23S rRNA. One of the proteins that surrounds the polypeptide exit tunnel on the outside of the ribosome. Forms the main docking site for trigger factor binding to the ribosome. This is Large ribosomal subunit protein uL23 from Bacillus mycoides (strain KBAB4) (Bacillus weihenstephanensis).